Reading from the N-terminus, the 520-residue chain is Ribonuclease Y (520 aa).

Residues 3-23 form a helical membrane-spanning segment; it reads IELAIIFIVLAAGAGFLIGNL. In terms of domain architecture, KH spans 210–273; the sequence is TVSVVALPSD…EVAKIALEKL (64 aa). An HD domain is found at 336–429; it reads VYQHSLEVAF…VQAADALSGA (94 aa).

This sequence belongs to the RNase Y family.

It is found in the cell membrane. Its function is as follows. Endoribonuclease that initiates mRNA decay. This chain is Ribonuclease Y, found in Geobacter sulfurreducens (strain ATCC 51573 / DSM 12127 / PCA).